A 156-amino-acid chain; its full sequence is Cell division protein SepF (156 aa).

It belongs to the SepF family. As to quaternary structure, homodimer. Interacts with FtsZ.

Its subcellular location is the cytoplasm. In terms of biological role, cell division protein that is part of the divisome complex and is recruited early to the Z-ring. Probably stimulates Z-ring formation, perhaps through the cross-linking of FtsZ protofilaments. Its function overlaps with FtsA. This chain is Cell division protein SepF, found in Bacillus cytotoxicus (strain DSM 22905 / CIP 110041 / 391-98 / NVH 391-98).